A 116-amino-acid polypeptide reads, in one-letter code: M-zodatoxin-Lt6a/c (116 aa).

The first 22 residues, 1–22, serve as a signal peptide directing secretion; that stretch reads MKYFVVALTLAVAFVCIEECKT. 2 consecutive propeptides follow at residues 23–44 and 80–83; these read VEIGYAVSEDFDQNEIDNDEAR and EEAR. Short sequence motifs (processing quadruplet motif) lie at residues 41-44 and 80-83; these read DEAR and EEAR. Gln84 carries the pyrrolidone carboxylic acid modification.

The protein belongs to the cationic peptide 03 (latarcin) family. 06 subfamily. Cleavage of the propeptide depends on the processing quadruplet motif (XXXR, with at least one of X being E). As to expression, expressed by the venom gland.

The protein localises to the secreted. Functionally, does not have antimicrobial activity against Gram-positive bacteria (A.globiformis VKM Ac-1112 (MIC&gt;70 uM) and B.subtilis VKM B-501 (MIC&gt;70 uM)), Gram-negative bacteria (E.coli DH5-alpha (MIC&gt;70 uM), E.coli MH1 (MIC&gt;70 uM) and P.aeruginosa PAO1 (MIC&gt;70 uM)), yeast (P.pastoris GS115 (MIC&gt;70 uM) or S.cerevisiae Y190 (MIC&gt;70 uM)). Does not have hemolytic activity against rabbit erythrocytes. However, it causes some conductance changes in planar bilayer membranes, without membrane rupture, suggesting a cytolytic function on other biological targets. It causes paralysis, but is not lethal when injected into insect larvae. The protein is M-zodatoxin-Lt6a/c of Lachesana tarabaevi (Spider).